The sequence spans 506 residues: Cytochrome P450 monooxygenase TES1 (506 aa).

A helical membrane pass occupies residues 26 to 46 (MSVVLAGLILLASIYFPRFMF). N-linked (GlcNAc...) asparagine glycans are attached at residues N167, N201, N298, and N427. C440 lines the heme pocket.

The protein belongs to the cytochrome P450 family. The cofactor is heme.

The protein localises to the membrane. Its pathway is phytotoxin biosynthesis. Cytochrome P450 monooxygenase; part of the gene cluster that mediates the biosynthesis of the phytotoxin tentoxin, an inhibitor the F1-ATPase activity of chloroplasts, resulting in chlorosis in sensitive plants. Tentoxin is a cyclic tetrapeptide that consists of four amino acid residues: glycine (Gly), alanine (Ala), leucine (Leu), and dehydrophenylalanine (DPhe). In addition, both the Ala and DPhe residues are N-methylated. The nonribosomal peptide synthetase TES assembles tentoxin from the four substrate amino acids. The adenylation domains of each of the 4 modules are responsible for the activation of Gly, Ala, Leu and DPhe, respectively. In addition, the N-methyltransferase domains in the second and fourth modules of TES could be responsible for N-methylation of Ala and DPhe residues. Finally, the condensation domain located in the termination module probably catalyzes the formation of the intramolecular macrocyclization and then the release of tentoxin. The cytochrome P450 monooxygenase TES1 is predicted to be involved in the formation of DPhe. In Alternaria alternata (Alternaria rot fungus), this protein is Cytochrome P450 monooxygenase TES1.